A 79-amino-acid chain; its full sequence is Small ribosomal subunit protein bS21A (79 aa).

Residues 57 to 79 (LARKKLQREGLLPAPKKVLRPTR) are disordered.

This sequence belongs to the bacterial ribosomal protein bS21 family.

This chain is Small ribosomal subunit protein bS21A, found in Rhizobium johnstonii (strain DSM 114642 / LMG 32736 / 3841) (Rhizobium leguminosarum bv. viciae).